Here is a 445-residue protein sequence, read N- to C-terminus: Phosphoglucosamine mutase (445 aa).

Serine 99 functions as the Phosphoserine intermediate in the catalytic mechanism. Mg(2+) is bound by residues serine 99, aspartate 242, aspartate 244, and aspartate 246. The residue at position 99 (serine 99) is a Phosphoserine.

Belongs to the phosphohexose mutase family. Requires Mg(2+) as cofactor. Activated by phosphorylation.

It catalyses the reaction alpha-D-glucosamine 1-phosphate = D-glucosamine 6-phosphate. Catalyzes the conversion of glucosamine-6-phosphate to glucosamine-1-phosphate. The chain is Phosphoglucosamine mutase from Campylobacter jejuni (strain RM1221).